A 550-amino-acid polypeptide reads, in one-letter code: Arginine--tRNA ligase (550 aa).

Residues A123–H133 carry the 'HIGH' region motif.

It belongs to the class-I aminoacyl-tRNA synthetase family. Monomer.

The protein resides in the cytoplasm. It carries out the reaction tRNA(Arg) + L-arginine + ATP = L-arginyl-tRNA(Arg) + AMP + diphosphate. The protein is Arginine--tRNA ligase of Ureaplasma parvum serovar 3 (strain ATCC 27815 / 27 / NCTC 11736).